A 178-amino-acid chain; its full sequence is MSRIGKKPIDIPSGVEVTVGADVVSVKGPKGTITTPVHPMVSFTVADNAVEVKRSGDSRQERAQHGLHRSLLANCIEGVSKGFSKTLEVVGVGYKVNVQGKNIVLNVGFSHPVNYELPAGIEASAEGNTKLTISGVDKQLVGEVAAQLRRVRPPEPYKGKGIKYIDEQIRRKAGKSGK.

Belongs to the universal ribosomal protein uL6 family. As to quaternary structure, part of the 50S ribosomal subunit.

In terms of biological role, this protein binds to the 23S rRNA, and is important in its secondary structure. It is located near the subunit interface in the base of the L7/L12 stalk, and near the tRNA binding site of the peptidyltransferase center. The polypeptide is Large ribosomal subunit protein uL6 (Maridesulfovibrio salexigens (strain ATCC 14822 / DSM 2638 / NCIMB 8403 / VKM B-1763) (Desulfovibrio salexigens)).